A 355-amino-acid chain; its full sequence is UDP-N-acetylglucosamine--N-acetylmuramyl-(pentapeptide) pyrophosphoryl-undecaprenol N-acetylglucosamine transferase (355 aa).

UDP-N-acetyl-alpha-D-glucosamine is bound by residues 15 to 17 (TGG), Asn-127, Arg-163, Ser-191, Ile-244, 263 to 268 (ALTVSE), and Gln-288.

Belongs to the glycosyltransferase 28 family. MurG subfamily.

Its subcellular location is the cell inner membrane. The enzyme catalyses di-trans,octa-cis-undecaprenyl diphospho-N-acetyl-alpha-D-muramoyl-L-alanyl-D-glutamyl-meso-2,6-diaminopimeloyl-D-alanyl-D-alanine + UDP-N-acetyl-alpha-D-glucosamine = di-trans,octa-cis-undecaprenyl diphospho-[N-acetyl-alpha-D-glucosaminyl-(1-&gt;4)]-N-acetyl-alpha-D-muramoyl-L-alanyl-D-glutamyl-meso-2,6-diaminopimeloyl-D-alanyl-D-alanine + UDP + H(+). It participates in cell wall biogenesis; peptidoglycan biosynthesis. Its function is as follows. Cell wall formation. Catalyzes the transfer of a GlcNAc subunit on undecaprenyl-pyrophosphoryl-MurNAc-pentapeptide (lipid intermediate I) to form undecaprenyl-pyrophosphoryl-MurNAc-(pentapeptide)GlcNAc (lipid intermediate II). This Salmonella typhi protein is UDP-N-acetylglucosamine--N-acetylmuramyl-(pentapeptide) pyrophosphoryl-undecaprenol N-acetylglucosamine transferase.